The primary structure comprises 342 residues: Outer membrane porin C (342 aa).

This sequence belongs to the Gram-negative porin family. As to quaternary structure, homotrimer.

Its subcellular location is the cell outer membrane. Its function is as follows. Forms pores that allow passive diffusion of small molecules across the outer membrane. In R.aquatilis OmpC is involved in the adhesion to wheat roots. The chain is Outer membrane porin C (ompC) from Rahnella aquatilis.